Here is a 181-residue protein sequence, read N- to C-terminus: Acireductone dioxygenase (181 aa).

Residues His-97, His-99, Glu-103, and His-141 each contribute to the Fe(2+) site. Residues His-97, His-99, Glu-103, and His-141 each contribute to the Ni(2+) site.

It belongs to the acireductone dioxygenase (ARD) family. In terms of assembly, monomer. The cofactor is Fe(2+). Requires Ni(2+) as cofactor.

It carries out the reaction 1,2-dihydroxy-5-(methylsulfanyl)pent-1-en-3-one + O2 = 3-(methylsulfanyl)propanoate + CO + formate + 2 H(+). The catalysed reaction is 1,2-dihydroxy-5-(methylsulfanyl)pent-1-en-3-one + O2 = 4-methylsulfanyl-2-oxobutanoate + formate + 2 H(+). The protein operates within amino-acid biosynthesis; L-methionine biosynthesis via salvage pathway; L-methionine from S-methyl-5-thio-alpha-D-ribose 1-phosphate: step 5/6. In terms of biological role, catalyzes 2 different reactions between oxygen and the acireductone 1,2-dihydroxy-3-keto-5-methylthiopentene (DHK-MTPene) depending upon the metal bound in the active site. Fe-containing acireductone dioxygenase (Fe-ARD) produces formate and 2-keto-4-methylthiobutyrate (KMTB), the alpha-ketoacid precursor of methionine in the methionine recycle pathway. Ni-containing acireductone dioxygenase (Ni-ARD) produces methylthiopropionate, carbon monoxide and formate, and does not lie on the methionine recycle pathway. The polypeptide is Acireductone dioxygenase (Pseudomonas syringae pv. syringae (strain B728a)).